The following is a 615-amino-acid chain: Sodium-dependent noradrenaline transporter (615 aa).

The interval 1-28 (MLLARMNPQVQPENGGAGPGSEQPPRKR) is disordered. Residues 1 to 60 (MLLARMNPQVQPENGGAGPGSEQPPRKRKEVLVVKERNGVQCLLASRDGDEQPRETWGKK) lie on the Cytoplasmic side of the membrane. A helical transmembrane segment spans residues 61–86 (IDFLLSVVGFAVDLANVWRFPYLCYK). The Na(+) site is built by Gly69, Ala71, and Val72. Asp73 is a (R)-noradrenaline binding site. Dopamine is bound at residue Asp73. Asn76 lines the Na(+) pocket. The (R)-noradrenaline site is built by Tyr85 and Lys86. Residues 87-90 (NGGG) are Extracellular-facing. A helical membrane pass occupies residues 91-114 (AFLIPYTLFLIIAGMPLFYMELAL). Topologically, residues 115 to 133 (GQYNREGAATVWKICPFFK) are cytoplasmic. The chain crosses the membrane as a helical span at residues 134–164 (GVGYAVILIALYVGFYYNVIIAWSLYYLFSS). Residues Ala143 and Gly147 each contribute to the (R)-noradrenaline site. Ala143 contributes to the dopamine binding site. Over 165–231 (FTPTLPWTDC…SSGIHDIGLP (67 aa)) the chain is Extracellular. A disulfide bridge links Cys174 with Cys183. Residues Asn182, Asn190, and Asn196 are each glycosylated (N-linked (GlcNAc...) asparagine). Residues 232–252 (QWQLLLCLIIVVIVLFFSLWK) form a helical membrane-spanning segment. Residues 253-255 (GVK) are Cytoplasmic-facing. The helical transmembrane segment at 256-280 (TSGKVVWITATLPYLVLFVLLVHGI) threads the bilayer. The Extracellular portion of the chain corresponds to 281–304 (TLPGASNGINAYLHIDFYRLKEAT). Residues 305–330 (VWIDAATQIFFSLGAGFGVLIAFASY) traverse the membrane as a helical segment. Phe315 contributes to the (R)-noradrenaline binding site. Phe315 contacts dopamine. Ser316 contributes to the Na(+) binding site. At 331–336 (NKFDNN) the chain is on the cytoplasmic side. The helical transmembrane segment at 337-360 (CYRDALLTSTINCVTSFISGFAIF) threads the bilayer. Asn348 provides a ligand contact to Na(+). The Extracellular portion of the chain corresponds to 361 to 400 (SILGYMAHEHKVNIEDVATEGAGLVFILYPEAISTLSGST). Glu380 provides a ligand contact to (R)-noradrenaline. Glu380 is a dopamine binding site. A helical membrane pass occupies residues 401 to 426 (FWAIVFFIMLLALGIDSSMGGMEAVI). 2 residues coordinate Na(+): Asp416 and Ser417. The Cytoplasmic portion of the chain corresponds to 427 to 441 (TGLADDFQVLKRHRK). A helical transmembrane segment spans residues 442–462 (LFTFAVSFGTFLLALFCITKG). Residue Gly463 is a topological domain, extracellular. The chain crosses the membrane as a helical span at residues 464 to 490 (IYVLTLLDTFAAGTSILFAVLMEAIGV). Residues 491-520 (SWFYGVDRFSNDIQQMMGFKPGLYWRLCWK) are Cytoplasmic-facing. A helical transmembrane segment spans residues 521-543 (FVSPAFLLFVVIVSIINFKPLTY). The Extracellular segment spans residues 544–546 (DDY). The chain crosses the membrane as a helical span at residues 547 to 567 (IFPLWANWVGWGIAGSSMVLV). The Cytoplasmic portion of the chain corresponds to 568 to 615 (PAYIVYKFFSTRGSIRERLAYGITPASEHHLVAQRDIRQFQLQHWLAI).

The protein belongs to the sodium:neurotransmitter symporter (SNF) (TC 2.A.22) family. SLC6A2 subfamily. As to quaternary structure, monomer. Can form homodimers in the cell membrane; homodimerization is mostly mediated by cholesterol and lipids, and regulates neurotransmitter transport activity. Interacts with PRKCABP. Palmitoylated. Palmitoylation regulates protein levels and neurotransmitter transport.

It localises to the cell membrane. It is found in the cell projection. The protein localises to the axon. Its subcellular location is the synapse. The protein resides in the synaptosome. The enzyme catalyses (R)-noradrenaline(out) + chloride(out) + Na(+)(out) = (R)-noradrenaline(in) + chloride(in) + Na(+)(in). The catalysed reaction is dopamine(out) + chloride(out) + Na(+)(out) = dopamine(in) + chloride(in) + Na(+)(in). It catalyses the reaction dopamine(out) + chloride(out) + 2 Na(+)(out) = dopamine(in) + chloride(in) + 2 Na(+)(in). Its activity is regulated as follows. Inhibited by nisoxetine, oxaprotiline and desipramin. Mediates sodium- and chloride-dependent transport of norepinephrine (also known as noradrenaline), the primary signaling neurotransmitter in the autonomic sympathetic nervous system. Is responsible for norepinephrine re-uptake and clearance from the synaptic cleft, thus playing a crucial role in norepinephrine inactivation and homeostasis. Can also mediate sodium- and chloride-dependent transport of dopamine. The chain is Sodium-dependent noradrenaline transporter (SLC6A2) from Bos taurus (Bovine).